The chain runs to 263 residues: MAQDMTYARYLALDELLSAQKPLSDRHDELLFIVIHQTKELWLKEILHEVALALKLIAGGDVEPAYKALARVSRIQTVMTLSWDILATMTPADYLSFRDDLGTSSGFQSHQFRALEYLLGLKDQSFLKFHTERPEALAMLKSALESPSLYDVAIAQLPRHGLTVPDAALHRDFSQTYVPSPEVEAAWLEVYRDPKRYWELYQLAEKLVDLDDALVTWRHKHVLTVERIIGGRPGTGGTDGVGYLASTLRRRAFPELWSLRTKL.

Residues 32–36 (FIVIH), Tyr94, and Arg98 each bind substrate. His221 lines the heme pocket. Thr235 contributes to the substrate binding site.

This sequence belongs to the tryptophan 2,3-dioxygenase family. Homotetramer. The cofactor is heme.

The catalysed reaction is L-tryptophan + O2 = N-formyl-L-kynurenine. It participates in amino-acid degradation; L-tryptophan degradation via kynurenine pathway; L-kynurenine from L-tryptophan: step 1/2. Heme-dependent dioxygenase that catalyzes the oxidative cleavage of the L-tryptophan (L-Trp) pyrrole ring and converts L-tryptophan to N-formyl-L-kynurenine. Catalyzes the oxidative cleavage of the indole moiety. This chain is Tryptophan 2,3-dioxygenase, found in Caulobacter vibrioides (strain ATCC 19089 / CIP 103742 / CB 15) (Caulobacter crescentus).